Consider the following 157-residue polypeptide: Small ribosomal subunit protein uS7 (157 aa).

The protein belongs to the universal ribosomal protein uS7 family. In terms of assembly, part of the 30S ribosomal subunit. Contacts proteins S9 and S11.

Functionally, one of the primary rRNA binding proteins, it binds directly to 16S rRNA where it nucleates assembly of the head domain of the 30S subunit. Is located at the subunit interface close to the decoding center, probably blocks exit of the E-site tRNA. This chain is Small ribosomal subunit protein uS7, found in Polaromonas naphthalenivorans (strain CJ2).